The chain runs to 449 residues: Transcription factor AP-2 gamma (449 aa).

Lys-10 is covalently cross-linked (Glycyl lysine isopeptide (Lys-Gly) (interchain with G-Cter in SUMO)). The interval 13–58 (EDCEDRHDSSSNGNPRIPHLSSPGQHLYSPAPPLSHTGVAEYQPPP) is disordered. A PPxY motif motif is present at residues 59–64 (YFPPPY). The tract at residues 94-130 (AATGSQQQAWPGRQSQEGSSLASHHSRSASLIPHISG) is disordered. The span at 95–111 (ATGSQQQAWPGRQSQEG) shows a compositional bias: polar residues. Low complexity predominate over residues 112-124 (SSLASHHSRSASL). The residue at position 251 (Ser-251) is a Phosphoserine; by PKA. The segment at 292-423 (RRKAAHVTLL…YIKEALIAID (132 aa)) is H-S-H (helix-span-helix), dimerization. The segment at 426–449 (YMNPGDQSPADSSKTMEKMEKHRK) is disordered. Position 433 is a phosphoserine (Ser-433). Basic and acidic residues predominate over residues 439–449 (KTMEKMEKHRK).

The protein belongs to the AP-2 family. As to quaternary structure, binds DNA as a dimer. Can form homodimers or heterodimers with other AP-2 family members. Interacts with WWOX. Interacts with UBE2I. Interacts with KCTD1; this interaction represses transcription activation. Interacts with CITED2 (via C-terminus); the interaction stimulates TFAP2B-transcriptional activity. Interacts with CITED4. Interacts with MTA1. Post-translationally, sumoylated on Lys-10; which inhibits transcriptional activity. Expressed in lung, ovary and testis. Expressed in most squamous epithelia. Also, detected in several exocrine glands including the prostate, the preputial and salivary glands, serous glands of the tongue and ocular harderian glands.

It localises to the nucleus. Sequence-specific DNA-binding transcription factor that interacts with cellular enhancer elements to regulate transcription of selected genes, and which plays a key role in early embryonic development. AP-2 factors bind to the consensus sequence 5'-GCCNNNGGC-3' and activate genes involved in a large spectrum of important biological functions. TFAP2C plays a key role in early embryonic development by regulating both inner cell mass (ICM) and trophectoderm differentiation. At the 8-cell stage, during morula development, controls expression of cell-polarity genes. Upon trophoblast commitment, binds to late trophectoderm genes in blastocysts together with CDX2, and later to extra-embryonic ectoderm genes together with SOX2. Binds to both closed and open chromatin with other transcription factors. The sequence is that of Transcription factor AP-2 gamma from Mus musculus (Mouse).